A 458-amino-acid chain; its full sequence is Selection and upkeep of intraepithelial T-cells protein 3 (458 aa).

The first 24 residues, 1 to 24, serve as a signal peptide directing secretion; it reads MGSIQIIFAAYCVVLCVLQMLVLS. The Extracellular segment spans residues 25-237; it reads SEQFTITGLE…ESISIVLTGD (213 aa). An Ig-like V-type domain is found at 26–141; sequence EQFTITGLER…EEHITEVKVT (116 aa). 2 disulfide bridges follow: cysteine 49–cysteine 123 and cysteine 163–cysteine 217. Positions 142–231 constitute an Ig-like C1-type domain; it reads ATSSDIKIIM…LLTHQEESIS (90 aa). An N-linked (GlcNAc...) asparagine glycan is attached at asparagine 200. Residues 238-258 traverse the membrane as a helical segment; sequence LFSWKIDWILILSIIACVMIP. Residues 259 to 283 lie on the Cytoplasmic side of the membrane; the sequence is YSMTSYLQQHLIHGSCSQRSHHWRK. A helical membrane pass occupies residues 284-304; that stretch reads NAMVCMSSVIAIIGSMLILHL. Residues 305–324 lie on the Extracellular side of the membrane; it reads KQRVPISDQHFELDTLYLED. A helical membrane pass occupies residues 325 to 345; sequence ISVILCVVIVFNLKLNLLTYY. Over 346-359 the chain is Cytoplasmic; it reads RLERKYDGCTPGCK. Residues 360–380 traverse the membrane as a helical segment; the sequence is ACFYILKIIIIILPFVFTFGC. The Extracellular segment spans residues 381 to 414; sequence YNAIFLKYHQLQKKVSIPDPLYYFYTSWLVNMEM. Residues 415-435 traverse the membrane as a helical segment; that stretch reads LGVFLVFFPTFINLIEFSQFI. Over 436–458 the chain is Cytoplasmic; that stretch reads KTVPKPIWLCQENMREDDAIRHR.

This sequence belongs to the SKINT family. In terms of tissue distribution, expressed in skin and thymus.

It is found in the membrane. In terms of biological role, may act by engaging a cell surface molecule on immature T-cells in the embryonic thymus. In Mus musculus (Mouse), this protein is Selection and upkeep of intraepithelial T-cells protein 3 (Skint3).